The primary structure comprises 1027 residues: Circadian locomoter output cycles protein kaput (1027 aa).

In terms of domain architecture, bHLH spans 15 to 65 (LCRKSRNLSEKKRRDQFNSLVNDLSALISTSSRKMDKSTVLKSTIAFLKNH). PAS domains follow at residues 88 to 160 (NDEY…VIEP) and 255 to 321 (REMS…ELRQ). Disordered regions lie at residues 377–402 (RKEG…ASTG), 443–575 (TSPA…QQLQ), 765–800 (QQMM…TQQQ), 869–911 (TINP…NNED), and 926–1027 (SINF…GSSQ). Residues 383 to 402 (SGNSNSITNNGSSKVIASTG) show a composition bias toward low complexity. Residues 443-486 (TSPAVDSSPMWSASAVQPSGSCQINPLKTSRPASSYGNISSTGI) are compositionally biased toward polar residues. Composition is skewed to low complexity over residues 504 to 516 (SDST…SVTS) and 552 to 575 (QQQQ…QQLQ). Residues 780 to 1027 (QHNLQQQHQS…SPHTAPGSSQ (248 aa)) are implicated in the circadian rhythmicity. 2 stretches are compositionally biased toward low complexity: residues 871 to 909 (NPFN…QNNN) and 951 to 995 (SGSN…NQNQ). The segment covering 1006–1027 (QMSQEQSQNLFNSPHTAPGSSQ) has biased composition (polar residues).

As to quaternary structure, efficient DNA binding requires dimerization with another bHLH protein. Forms a heterodimer with Cycle. Widely expressed. Found in head, body, and appendage fractions.

It localises to the nucleus. In terms of biological role, circadian regulator that acts as a transcription factor and generates a rhythmic output with a period of about 24 hours. Oscillates in antiphase to the cycling observed for period (PER) and timeless (TIM). According to PubMed:9742131, reaches peak abundance within several hours of the dark-light transition at ZT0 (zeitgeber 0), whereas PubMed:9616122 describes bimodal oscillating expression with maximum at ZT5 and ZT23. Clock-cycle heterodimers activate cycling transcription of PER and TIM by binding to the E-box (5'-CACGTG-3') present in their promoters. Once induced, Period and Timeless block Clock's ability to transactivate their promoters. The protein is Circadian locomoter output cycles protein kaput (Clk) of Drosophila melanogaster (Fruit fly).